A 505-amino-acid polypeptide reads, in one-letter code: Lysine--tRNA ligase (505 aa).

Residues Glu-415 and Glu-422 each contribute to the Mg(2+) site.

This sequence belongs to the class-II aminoacyl-tRNA synthetase family. Homodimer. Requires Mg(2+) as cofactor.

The protein resides in the cytoplasm. The enzyme catalyses tRNA(Lys) + L-lysine + ATP = L-lysyl-tRNA(Lys) + AMP + diphosphate. This Cronobacter sakazakii (strain ATCC BAA-894) (Enterobacter sakazakii) protein is Lysine--tRNA ligase.